A 173-amino-acid chain; its full sequence is NADH-ubiquinone oxidoreductase chain 6 (173 aa).

Transmembrane regions (helical) follow at residues Met1 to Ser21, Tyr27 to Gly47, Val48 to Val68, Val88 to Ile108, and Tyr139 to Leu159.

Belongs to the complex I subunit 6 family.

It is found in the mitochondrion membrane. It carries out the reaction a ubiquinone + NADH + 5 H(+)(in) = a ubiquinol + NAD(+) + 4 H(+)(out). Functionally, core subunit of the mitochondrial membrane respiratory chain NADH dehydrogenase (Complex I) that is believed to belong to the minimal assembly required for catalysis. Complex I functions in the transfer of electrons from NADH to the respiratory chain. The immediate electron acceptor for the enzyme is believed to be ubiquinone. The chain is NADH-ubiquinone oxidoreductase chain 6 (MT-ND6) from Calidris maritima (Purple sandpiper).